The sequence spans 518 residues: Equilibrative nucleoside transporter 4 (518 aa).

A compositionally biased stretch (basic and acidic residues) spans 1 to 10; the sequence is MGSKGAERRK. Residues 1–21 are disordered; the sequence is MGSKGAERRKQATPGQTPEGN. Residues 1–66 lie on the Extracellular side of the membrane; sequence MGSKGAERRK…EEAVPDDRYH (66 aa). The helical transmembrane segment at 67-87 threads the bilayer; it reads GIYFAMLLAGVGFLLPYNSFI. The Cytoplasmic portion of the chain corresponds to 88–99; it reads TDVDYLHHKFEG. A helical transmembrane segment spans residues 100–120; the sequence is TSIVFDMGLTYILVALVAVIL. Residues 121-133 are Extracellular-facing; sequence NNVLVEMLSLHTR. The chain crosses the membrane as a helical span at residues 134–154; sequence ITVGYLFALGPLLFVTIFDVW. Residues 155-157 are Cytoplasmic-facing; sequence LER. Residues 158-178 form a helical membrane-spanning segment; sequence FTIKQAYVINLMSMGTVAFGC. Over 179–198 the chain is Extracellular; the sequence is TVQQSSFYGYMGMLPKRYTQ. The chain crosses the membrane as a helical span at residues 199 to 218; sequence GVMTGESTAGVIISLSRIFT. Residues 219–229 lie on the Cytoplasmic side of the membrane; it reads KLLIKDERKNT. A helical membrane pass occupies residues 230-250; sequence IIFFVISICMVLVCFILHLLV. Residues 251 to 342 lie on the Extracellular side of the membrane; it reads RRTRFVQYYT…MILHRYVVAR (92 aa). The helical transmembrane segment at 343 to 363 threads the bilayer; the sequence is VIWTYMLSIAVTYFITLCLFP. The Cytoplasmic segment spans residues 364-376; sequence GLESEIKNATLGE. The helical transmembrane segment at 377-397 threads the bilayer; that stretch reads WLPILIMAIFNISDFVGKILA. At 398–407 the chain is on the extracellular side; the sequence is AVPYEWNGTR. A helical membrane pass occupies residues 408–428; sequence LLFFSCVRVVFIPLFIMCVYP. Residues 429-439 lie on the Cytoplasmic side of the membrane; it reads AQMPMFSHPAW. A helical transmembrane segment spans residues 440 to 460; sequence PCIFSLFMGITNGYFGSVPMI. Residues 461–476 are Extracellular-facing; the sequence is HAAGKVAPEQRELAGN. Residues 477–497 traverse the membrane as a helical segment; that stretch reads IMTVSYMSGLMLGSVVAYAAY. At 498-518 the chain is on the cytoplasmic side; it reads SFTASGSSFHSQTGYNFTQGY.

This sequence belongs to the SLC29A/ENT transporter (TC 2.A.57) family.

It localises to the membrane. Functions as a polyspecific organic cation transporter, efficiently transporting many organic cations such as monoamine neurotransmitters 1-methyl-4-phenylpyridinium and biogenic amines including serotonin, dopamine, norepinephrine and epinephrine. May play a role in regulating central nervous system homeostasis of monoamine neurotransmitters. May be involved in luminal transport of organic cations in the kidney and seems to use luminal proton gradient to drive organic cation reabsorption. Does not seem to transport nucleoside and nucleoside analogs such as uridine, cytidine, thymidine, adenosine, inosine, guanosine, and azidothymidine. This Danio rerio (Zebrafish) protein is Equilibrative nucleoside transporter 4 (slc29a4).